Consider the following 83-residue polypeptide: Cyclin-dependent kinases regulatory subunit 2 (83 aa).

It belongs to the CKS family. As to quaternary structure, interacts with CDKA-1, CYCD2-1 and AT4G14310.

Binds to the catalytic subunit of the cyclin dependent kinases and is essential for their biological function. The chain is Cyclin-dependent kinases regulatory subunit 2 (CKS2) from Arabidopsis thaliana (Mouse-ear cress).